A 381-amino-acid chain; its full sequence is Probable serine/threonine-protein kinase PBL22 (381 aa).

Cys-3 carries S-palmitoyl cysteine lipidation. Thr-64 is subject to Phosphothreonine. Residues Phe-75–Ile-351 enclose the Protein kinase domain. Residues Ile-81–Val-89 and Lys-103 contribute to the ATP site. Tyr-148 is modified (phosphotyrosine). Asp-201 acts as the Proton acceptor in catalysis. Phosphoserine is present on Ser-235. Residues Thr-236 and Thr-241 each carry the phosphothreonine modification. The residue at position 249 (Tyr-249) is a Phosphotyrosine. Residues Arg-361 to Tyr-381 form a disordered region.

The protein belongs to the protein kinase superfamily. Ser/Thr protein kinase family. Palmitoylation at Cys-3 and Cys-6 are required for plasma membrane location.

It localises to the cell membrane. It catalyses the reaction L-seryl-[protein] + ATP = O-phospho-L-seryl-[protein] + ADP + H(+). The enzyme catalyses L-threonyl-[protein] + ATP = O-phospho-L-threonyl-[protein] + ADP + H(+). Its function is as follows. May be involved in plant defense signaling. The protein is Probable serine/threonine-protein kinase PBL22 of Arabidopsis thaliana (Mouse-ear cress).